The chain runs to 290 residues: Bifunctional protein FolD (290 aa).

NADP(+)-binding positions include 174–176 (GHS), Ile199, and Ile240.

Belongs to the tetrahydrofolate dehydrogenase/cyclohydrolase family. As to quaternary structure, homodimer.

The catalysed reaction is (6R)-5,10-methylene-5,6,7,8-tetrahydrofolate + NADP(+) = (6R)-5,10-methenyltetrahydrofolate + NADPH. It carries out the reaction (6R)-5,10-methenyltetrahydrofolate + H2O = (6R)-10-formyltetrahydrofolate + H(+). It functions in the pathway one-carbon metabolism; tetrahydrofolate interconversion. Its function is as follows. Catalyzes the oxidation of 5,10-methylenetetrahydrofolate to 5,10-methenyltetrahydrofolate and then the hydrolysis of 5,10-methenyltetrahydrofolate to 10-formyltetrahydrofolate. In Methanosarcina acetivorans (strain ATCC 35395 / DSM 2834 / JCM 12185 / C2A), this protein is Bifunctional protein FolD.